We begin with the raw amino-acid sequence, 155 residues long: Deoxyuridine 5'-triphosphate nucleotidohydrolase (155 aa).

Residues 74–76 (RSG), asparagine 87, and 91–93 (TID) each bind substrate.

The protein belongs to the dUTPase family. It depends on Mg(2+) as a cofactor.

It catalyses the reaction dUTP + H2O = dUMP + diphosphate + H(+). It functions in the pathway pyrimidine metabolism; dUMP biosynthesis; dUMP from dCTP (dUTP route): step 2/2. In terms of biological role, this enzyme is involved in nucleotide metabolism: it produces dUMP, the immediate precursor of thymidine nucleotides and it decreases the intracellular concentration of dUTP so that uracil cannot be incorporated into DNA. This is Deoxyuridine 5'-triphosphate nucleotidohydrolase from Cereibacter sphaeroides (strain ATCC 17023 / DSM 158 / JCM 6121 / CCUG 31486 / LMG 2827 / NBRC 12203 / NCIMB 8253 / ATH 2.4.1.) (Rhodobacter sphaeroides).